Reading from the N-terminus, the 207-residue chain is Superoxide dismutase [Fe] (207 aa).

The Fe cation site is built by His-28, His-76, Asp-160, and His-164.

The protein belongs to the iron/manganese superoxide dismutase family. In terms of assembly, homotetramer. Fe cation serves as cofactor.

Its subcellular location is the secreted. The catalysed reaction is 2 superoxide + 2 H(+) = H2O2 + O2. In terms of biological role, destroys superoxide anion radicals which are normally produced within the cells and which are toxic to biological systems. The polypeptide is Superoxide dismutase [Fe] (sodB) (Mycobacterium tuberculosis (strain CDC 1551 / Oshkosh)).